Consider the following 730-residue polypeptide: ABC transporter G family member 20 (730 aa).

An ABC transporter domain is found at 15–244 (ISLKNVCRGY…YESQTLEEVF (230 aa)). 47 to 54 (GASGSGKT) serves as a coordination point for ATP. Positions 281 to 303 (VNNNNNNNNNNNNNNYNNNDDEE) are disordered. The span at 282–298 (NNNNNNNNNNNNNNYNN) shows a compositional bias: low complexity. Residues 489–717 (SFETLAKQQA…FIAVLALNEK (229 aa)) form the ABC transmembrane type-2 domain. 5 consecutive transmembrane segments (helical) span residues 520-540 (FIDFLAPGMVCLISFAHAISI), 572-592 (FLGHLPLLLVQITVLLLIAIY), 602-622 (IALVFLMTVSLAFVGMSLGLV), 634-654 (IQLSLGVYFPTLICSGTLWPL), and 692-712 (VWVAFLVVLSWLIFLIFIAVL).

It belongs to the ABC transporter superfamily.

The protein resides in the membrane. The protein is ABC transporter G family member 20 (abcG20) of Dictyostelium discoideum (Social amoeba).